An 878-amino-acid polypeptide reads, in one-letter code: Leucine--tRNA ligase (878 aa).

The 'HIGH' region motif lies at 43 to 53 (PYPSGRIHMGH). Residues 630 to 634 (KMSKS) carry the 'KMSKS' region motif. ATP is bound at residue Lys633.

This sequence belongs to the class-I aminoacyl-tRNA synthetase family.

Its subcellular location is the cytoplasm. The catalysed reaction is tRNA(Leu) + L-leucine + ATP = L-leucyl-tRNA(Leu) + AMP + diphosphate. This Rhodopseudomonas palustris (strain BisB5) protein is Leucine--tRNA ligase.